A 190-amino-acid chain; its full sequence is dCTP deaminase (190 aa).

DCTP is bound by residues 111–116, 135–137, Gln156, Tyr172, and Gln182; these read KSTYAR and TLE. Glu137 functions as the Proton donor/acceptor in the catalytic mechanism.

The protein belongs to the dCTP deaminase family. In terms of assembly, homotrimer.

The catalysed reaction is dCTP + H2O + H(+) = dUTP + NH4(+). Its pathway is pyrimidine metabolism; dUMP biosynthesis; dUMP from dCTP (dUTP route): step 1/2. Its function is as follows. Catalyzes the deamination of dCTP to dUTP. This is dCTP deaminase from Stenotrophomonas maltophilia (strain K279a).